The primary structure comprises 351 residues: Rhodopsin (351 aa).

Topologically, residues 1–36 are extracellular; sequence MNGTEGQDFYVPMSNKTGVVRSPFEYPQYYLAEPWK. Residues Asn-2 and Asn-15 are each glycosylated (N-linked (GlcNAc...) asparagine). A helical membrane pass occupies residues 37-61; sequence FSALAAYMFMLILLGFPVNFLTLYV. The Cytoplasmic portion of the chain corresponds to 62–73; that stretch reads TIQHKKLRTPLN. The helical transmembrane segment at 74-96 threads the bilayer; that stretch reads YILLNLVVADLFMVFGGFTTTMY. The Extracellular portion of the chain corresponds to 97 to 110; the sequence is TSMNGYFVFGVTGC. Cys-110 and Cys-187 are disulfide-bonded. The chain crosses the membrane as a helical span at residues 111–133; it reads YIEGFFATLGGEIALWSLVVLAV. Positions 134 to 136 match the 'Ionic lock' involved in activated form stabilization motif; that stretch reads ERY. At 134–152 the chain is on the cytoplasmic side; the sequence is ERYVVVCKPMSNFRFGENH. A helical membrane pass occupies residues 153–173; sequence AIMGVAFSWIMAMACAAPPLF. At 174-202 the chain is on the extracellular side; sequence GWSRYIPEGMQCSCGIDYYTLKPEINNES. Residues 203–224 traverse the membrane as a helical segment; it reads FVIYMFVVHFMIPLAVIFFCYG. Over 225-252 the chain is Cytoplasmic; it reads NLVCTVKEAAAQQQESATTQKAEKEVTR. Residues 253-274 form a helical membrane-spanning segment; the sequence is MVIIMVIAFLICWVPYASVAFY. Over 275–286 the chain is Extracellular; it reads IFTNQGSDFGPI. A helical transmembrane segment spans residues 287–308; sequence FMTIPAFFAKSSAIYNPVIYIV. At Lys-296 the chain carries N6-(retinylidene)lysine. Residues 309–351 lie on the Cytoplasmic side of the membrane; that stretch reads MNKQFRNCMITTLCCGKNPLGDEDTSAGKTETSSVSTSQVSPA. 2 S-palmitoyl cysteine lipidation sites follow: Cys-322 and Cys-323. Positions 331–351 are disordered; that stretch reads EDTSAGKTETSSVSTSQVSPA. Residues 340–351 show a composition bias toward low complexity; the sequence is TSSVSTSQVSPA. Position 341 is a phosphoserine; by RK and GRK7 (Ser-341).

This sequence belongs to the G-protein coupled receptor 1 family. Opsin subfamily. Post-translationally, contains one covalently linked retinal chromophore. Upon light absorption, the covalently bound 11-cis-retinal is converted to all-trans-retinal. After hydrolysis of the Schiff base and release of the covalently bound all-trans-retinal, active rhodopsin is regenerated by binding of a fresh molecule of 11-cis-retinal.

It is found in the membrane. The protein resides in the cell projection. It localises to the cilium. The protein localises to the photoreceptor outer segment. Photoreceptor required for image-forming vision at low light intensity. Required for photoreceptor cell viability after birth. Light-induced isomerization of 11-cis to all-trans retinal triggers a conformational change that activates signaling via G-proteins. Subsequent receptor phosphorylation mediates displacement of the bound G-protein alpha subunit by arrestin and terminates signaling. This chain is Rhodopsin (RHO), found in Gallus gallus (Chicken).